The primary structure comprises 704 residues: Glycogen [starch] synthase, liver (704 aa).

Residues Ser-8 and Ser-11 each carry the phosphoserine modification. Lys-40 lines the UDP pocket. Residues His-205 and Arg-211 each coordinate UDP-alpha-D-glucose. Residues His-291, Glu-292, Gln-294, His-297, and Lys-301 each contribute to the alpha-D-glucose 6-phosphate site. Residue Arg-331 participates in UDP binding. Arg-331 contributes to the UDP-alpha-D-glucose binding site. His-501 is a binding site for alpha-D-glucose 6-phosphate. The UDP-alpha-D-glucose site is built by Glu-510, Trp-512, and Gly-513. Thr-515 serves as a coordination point for UDP. Positions 582 and 586 each coordinate alpha-D-glucose 6-phosphate. A disordered region spans residues 620–704 (KFHLEPTSPP…KKKLHGEYKN (85 aa)). A Phosphoserine modification is found at Ser-627. Phosphoserine; by GSK3-alpha and GSK3-beta is present on residues Ser-641, Ser-645, Ser-649, and Ser-653. Residues 647-657 (SGSQTSSPQSS) show a composition bias toward low complexity. A Phosphoserine; by CK2 modification is found at Ser-657. Over residues 659–675 (VENEGDEDERYDEEEEA) the composition is skewed to acidic residues. The residue at position 684 (Ser-684) is a Phosphoserine.

This sequence belongs to the glycosyltransferase 3 family. As to quaternary structure, part of the glycogen synthase (GS)-glycogenin complex, a heterooctamer composed of a tetramer of GS and 2 dimers of glycogenin, where each GS protomer binds to one glycogenin subunit (via glycogenin C-terminus); the GS tetramer may dissociate from glycogenin dimers to continue glycogen polymerization on its own. May also form a heterooctamer complex with GYG1 (via GYG1 C-terminus). Primed phosphorylation at Ser-657 (site 5) by CSNK2A1 and CSNK2A2 is required for inhibitory phosphorylation at Ser-641 (site 3a), Ser-645 (site 3b), Ser-649 (site 3c) and Ser-653 (site 4) by GSK3A an GSK3B. Dephosphorylation at Ser-641 and Ser-645 by PP1 activates the enzyme. Phosphorylation at Ser-8 is not required for interaction with GYG1. Interaction with GYG1 does not regulate the phosphorylation at Ser-8 and Ser-641. Specifically expressed in liver (at protein level).

It catalyses the reaction [(1-&gt;4)-alpha-D-glucosyl](n) + UDP-alpha-D-glucose = [(1-&gt;4)-alpha-D-glucosyl](n+1) + UDP + H(+). It participates in glycan biosynthesis; glycogen biosynthesis. With respect to regulation, allosteric activation by glucose-6-phosphate. Phosphorylation reduces the activity towards UDP-glucose. When in the non-phosphorylated state, glycogen synthase does not require glucose-6-phosphate as an allosteric activator; when phosphorylated it does. Its function is as follows. Glycogen synthase participates in the glycogen biosynthetic process along with glycogenin and glycogen branching enzyme. Extends the primer composed of a few glucose units formed by glycogenin by adding new glucose units to it. In this context, glycogen synthase transfers the glycosyl residue from UDP-Glc to the non-reducing end of alpha-1,4-glucan. In Rattus norvegicus (Rat), this protein is Glycogen [starch] synthase, liver.